The sequence spans 409 residues: O-glucosyltransferase rumi (409 aa).

A signal peptide spans 1–20 (MLINVVLIILLVGLNGKASG). Intrachain disulfides connect Cys62–Cys73, Cys71–Cys376, Cys118–Cys124, and Cys280–Cys303. Catalysis depends on Asp149, which acts as the Proton donor/acceptor. The segment at 190–195 (ATKLHP) is interaction with the consensus sequence C-X-S-X-[PA]-C in peptide substrates. Residues 227–231 (RGSRT), Arg235, 274–276 (VSF), and 292–296 (AASFR) each bind UDP-alpha-D-glucose. A Prevents secretion from ER motif is present at residues 406 to 409 (KDEL).

It belongs to the glycosyltransferase 90 family.

The protein resides in the endoplasmic reticulum lumen. It participates in protein modification; protein glycosylation. Protein O-glucosyltransferase. Catalyzes the reaction that attaches glucose through an O-glycosidic linkage to a conserved serine residue found in the consensus sequence C-X-S-X-[PA]-C in epidermal growth factor-like repeats. Regulates Notch signaling by glucosylating Notch in the ER, glucosylation is required for the correct folding and cleavage of Notch. In Drosophila pseudoobscura pseudoobscura (Fruit fly), this protein is O-glucosyltransferase rumi.